The following is a 320-amino-acid chain: Solute carrier family 35 member B1 (320 aa).

The next 8 membrane-spanning stretches (helical) occupy residues 9–29, 49–69, 81–103, 134–154, 166–186, 202–222, 241–261, and 283–303; these read GLRLLVCFLGVFVCYFYYGIL, FALSLVFVQCIVNALFAKLLI, QSWLYSACSLSYLGAMVSSNSAL, YPLTKYLCVLLIVFGVALFMY, TVGYGELLLLLSLTLDGLTGV, MMLSINLWSSLFLGAGIVLTG, IVLFSLTSALGQTFIFMTVVY, and VILFSNPISSIQWVGTLLVFL. A Di-lysine motif motif is present at residues 316 to 320; that stretch reads KKPSH.

This sequence belongs to the nucleotide-sugar transporter family. SLC35B subfamily.

The protein localises to the endoplasmic reticulum membrane. Functionally, probable sugar transporter. The protein is Solute carrier family 35 member B1 (slc35b1) of Xenopus laevis (African clawed frog).